Here is a 195-residue protein sequence, read N- to C-terminus: MFDIGFSELALIAVVALVVLGPERLPKAARFAGLWVRRARMQWDSVKQELERELEAEELKRSLQDVQASLREAEGQLRNTQQQVEDGARGLHDQARELHDEVGRDIDIRTSATPLAAPLELQADAPVVLEPGSAQPHTPVPAPAPVVAQAQPMAPAPKQTLVPAPHGSLTSTQVTTHAPTASATASSTSPQEKTP.

A helical membrane pass occupies residues 1 to 21 (MFDIGFSELALIAVVALVVLG). The segment at 130–195 (EPGSAQPHTP…SSTSPQEKTP (66 aa)) is disordered. 2 stretches are compositionally biased toward low complexity: residues 145–157 (PVVA…APAP) and 175–195 (TTHA…EKTP).

The protein belongs to the TatB family. In terms of assembly, the Tat system comprises two distinct complexes: a TatABC complex, containing multiple copies of TatA, TatB and TatC subunits, and a separate TatA complex, containing only TatA subunits. Substrates initially bind to the TatABC complex, which probably triggers association of the separate TatA complex to form the active translocon.

The protein resides in the cell inner membrane. In terms of biological role, part of the twin-arginine translocation (Tat) system that transports large folded proteins containing a characteristic twin-arginine motif in their signal peptide across membranes. Together with TatC, TatB is part of a receptor directly interacting with Tat signal peptides. TatB may form an oligomeric binding site that transiently accommodates folded Tat precursor proteins before their translocation. The protein is Sec-independent protein translocase protein TatB of Xanthomonas campestris pv. campestris (strain 8004).